Consider the following 996-residue polypeptide: Disease resistance protein RGA4 (996 aa).

Residues 1 to 176 form a structured coiled coil (CC) domain region; that stretch reads MEAALLSGFI…PRIHEADLVG (176 aa). The stretch at 111 to 138 forms a coiled coil; that stretch reads NLQLAQQLQRLKRMAAEANQRKQRYTAA. Positions 180 to 462 constitute an NB-ARC domain; it reads DREELLEQLA…RWLAEGFVEP (283 aa). LRR repeat units lie at residues 481-503, 504-528, 529-549, 577-599, 600-621, 622-644, 698-722, 759-781, 782-804, 805-830, and 851-874; these read RNIIEPINVSNNDKVKTCQTYGM, MREFISHMSISQNFVTFFCDDKFVP, KYVRRLSLHGDTVVNGDNFNG, LRVLDLEKCDDLKDDHLKEICNL, VLLKYLSLGGNISKLPKDIAKL, KDLEALDVRRSKVKIMPVEVFGL, MNKLRKLKIWCTSSAGSTDWTDLRE, PCYLSSLKLHGNFPQLPQFVTSL, RGLKELCLSSTKFTTGLLEALSN, LSYLQYLKLVADELEKFIIKVQGFPR, and LPFLVTLQLLCKDLHGLSDIQIEC.

Belongs to the disease resistance NB-LRR family. In terms of assembly, forms homodimer or heterodimer with RGA5 through its coiled coil (CC) domain. In terms of tissue distribution, expressed in leaves.

The protein localises to the cytoplasm. In terms of biological role, disease resistance (R) protein. Resistance proteins guard the plant against pathogens that contain an appropriate avirulence protein via an indirect interaction with this avirulence protein. That triggers a defense system including the hypersensitive response, which restricts the pathogen growth. Contribution of RGA5 is required to recognize the effector avirulence proteins AVR-Pia and AVR1-CO39 from M.oryzae. Acts as a constitutively active cell death inducer that is repressed by RGA5. Immune response triggered by the RGA4-RGA5 -mediated recognition of AVR1-CO39 confers resistance to X.oryzae pathovars. The chain is Disease resistance protein RGA4 from Oryza sativa subsp. japonica (Rice).